The primary structure comprises 199 residues: Chaperone protein TorD (199 aa).

This sequence belongs to the TorD/DmsD family. TorD subfamily.

It is found in the cytoplasm. Functionally, involved in the biogenesis of TorA. Acts on TorA before the insertion of the molybdenum cofactor and, as a result, probably favors a conformation of the apoenzyme that is competent for acquiring the cofactor. This is Chaperone protein TorD from Shigella dysenteriae serotype 1 (strain Sd197).